A 146-amino-acid chain; its full sequence is Phospho-2-dehydro-3-deoxyheptonate aldolase (146 aa).

It belongs to the class-II DAHP synthase family. In terms of assembly, homodimer.

It carries out the reaction D-erythrose 4-phosphate + phosphoenolpyruvate + H2O = 7-phospho-2-dehydro-3-deoxy-D-arabino-heptonate + phosphate. It participates in metabolic intermediate biosynthesis; chorismate biosynthesis; chorismate from D-erythrose 4-phosphate and phosphoenolpyruvate: step 1/7. The chain is Phospho-2-dehydro-3-deoxyheptonate aldolase from Streptomyces lividans.